The sequence spans 401 residues: Imidazolonepropionase (401 aa).

Residues H70 and H72 each contribute to the Fe(3+) site. Positions 70 and 72 each coordinate Zn(2+). The 4-imidazolone-5-propanoate site is built by R79, Y142, and H175. Y142 provides a ligand contact to N-formimidoyl-L-glutamate. H240 lines the Fe(3+) pocket. H240 provides a ligand contact to Zn(2+). A 4-imidazolone-5-propanoate-binding site is contributed by Q243. D315 contributes to the Fe(3+) binding site. D315 provides a ligand contact to Zn(2+). N-formimidoyl-L-glutamate-binding residues include N317 and G319. Residue T320 coordinates 4-imidazolone-5-propanoate.

It belongs to the metallo-dependent hydrolases superfamily. HutI family. Zn(2+) is required as a cofactor. It depends on Fe(3+) as a cofactor.

It localises to the cytoplasm. The catalysed reaction is 4-imidazolone-5-propanoate + H2O = N-formimidoyl-L-glutamate. Its pathway is amino-acid degradation; L-histidine degradation into L-glutamate; N-formimidoyl-L-glutamate from L-histidine: step 3/3. In terms of biological role, catalyzes the hydrolytic cleavage of the carbon-nitrogen bond in imidazolone-5-propanoate to yield N-formimidoyl-L-glutamate. It is the third step in the universal histidine degradation pathway. This is Imidazolonepropionase from Caulobacter vibrioides (strain ATCC 19089 / CIP 103742 / CB 15) (Caulobacter crescentus).